A 285-amino-acid chain; its full sequence is Nucleotide-binding protein in ptsN-ptsO intergenic region (285 aa).

8-15 lines the ATP pocket; sequence GRSGSGKS. 60-63 provides a ligand contact to GTP; it reads DARN.

The protein belongs to the RapZ-like family.

Its function is as follows. Displays ATPase and GTPase activities. This is Nucleotide-binding protein in ptsN-ptsO intergenic region from Stutzerimonas stutzeri (Pseudomonas stutzeri).